The sequence spans 135 residues: Putative pre-16S rRNA nuclease (135 aa).

Belongs to the YqgF nuclease family.

It localises to the cytoplasm. In terms of biological role, could be a nuclease involved in processing of the 5'-end of pre-16S rRNA. This Clostridium acetobutylicum (strain ATCC 824 / DSM 792 / JCM 1419 / IAM 19013 / LMG 5710 / NBRC 13948 / NRRL B-527 / VKM B-1787 / 2291 / W) protein is Putative pre-16S rRNA nuclease.